We begin with the raw amino-acid sequence, 159 residues long: Putative pre-16S rRNA nuclease (159 aa).

This sequence belongs to the YqgF nuclease family.

The protein localises to the cytoplasm. Functionally, could be a nuclease involved in processing of the 5'-end of pre-16S rRNA. The protein is Putative pre-16S rRNA nuclease of Synechococcus sp. (strain JA-3-3Ab) (Cyanobacteria bacterium Yellowstone A-Prime).